Here is a 326-residue protein sequence, read N- to C-terminus: Malate dehydrogenase (326 aa).

12–18 (GGTGQIA) contributes to the NAD(+) binding site. Residues R93 and R99 each coordinate substrate. NAD(+)-binding positions include N106, Q113, and 130–132 (VGN). 2 residues coordinate substrate: N132 and R163. Residue H188 is the Proton acceptor of the active site.

The protein belongs to the LDH/MDH superfamily. MDH type 2 family.

It catalyses the reaction (S)-malate + NAD(+) = oxaloacetate + NADH + H(+). Functionally, catalyzes the reversible oxidation of malate to oxaloacetate. This Chlamydia muridarum (strain MoPn / Nigg) protein is Malate dehydrogenase.